The following is an 850-amino-acid chain: Protein monoglycylase TTLL8 (850 aa).

Disordered stretches follow at residues 1 to 29 (MEPE…QGIS) and 228 to 254 (RSSR…DAEN). The TTL domain maps to 222 to 580 (SHQSCSRSSR…DRSCDIGNFE (359 aa)). Residues K354, 360–361 (RG), 392–395 (QKYI), 405–407 (KFD), and 449–450 (CN) contribute to the ATP site. R360 contacts a protein. Residues D527, E540, and N542 each contribute to the Mg(2+) site. E540 is a binding site for ATP. The tract at residues 627-652 (AQPLKARGPSAMPDPAQGPPSPALQR) is disordered.

The cofactor is Mg(2+).

Its subcellular location is the cytoplasm. It localises to the cytoskeleton. It is found in the cell projection. The protein localises to the cilium. The protein resides in the cilium axoneme. Its subcellular location is the flagellum axoneme. It catalyses the reaction L-glutamyl-[protein] + glycine + ATP = glycyl-L-glutamyl-[protein] + ADP + phosphate + H(+). In terms of biological role, monoglycylase which modifies both tubulin and non-tubulin proteins, adding a single glycine to the gamma-carboxyl groups of specific glutamate residues to generate monoglycine side chains within the C-terminal tail of target proteins. Not involved in elongation step of the polyglycylation reaction. Preferentially monoglycylates alpha-tubulin over beta-tubulin. Together with TTLL3, mediates microtubule glycylation of primary and motile cilia, which is essential for their stability and maintenance. Together with TTLL3, glycylates sperm flagella which regulates axonemal dynein motor activity, thereby controlling flagellar beat, directional sperm swimming and male fertility. Monoglycylates non-tubulin proteins such as ANP32A, ANP32B, SET, NCL and NAP1. This chain is Protein monoglycylase TTLL8, found in Homo sapiens (Human).